The sequence spans 163 residues: Phosphopantetheine adenylyltransferase (163 aa).

Residue Thr-9 coordinates substrate. ATP is bound by residues 9-10 and His-17; that span reads TF. Residues Lys-41, Thr-73, and Arg-87 each coordinate substrate. ATP-binding positions include 88 to 90, Glu-98, and 123 to 129; these read GLR and FSFISSS.

Belongs to the bacterial CoaD family. As to quaternary structure, homohexamer. Requires Mg(2+) as cofactor.

It is found in the cytoplasm. It catalyses the reaction (R)-4'-phosphopantetheine + ATP + H(+) = 3'-dephospho-CoA + diphosphate. The protein operates within cofactor biosynthesis; coenzyme A biosynthesis; CoA from (R)-pantothenate: step 4/5. Its function is as follows. Reversibly transfers an adenylyl group from ATP to 4'-phosphopantetheine, yielding dephospho-CoA (dPCoA) and pyrophosphate. The chain is Phosphopantetheine adenylyltransferase from Desulfitobacterium hafniense (strain DSM 10664 / DCB-2).